A 339-amino-acid polypeptide reads, in one-letter code: DNA-directed RNA polymerase subunit alpha (339 aa).

The tract at residues 1–238 is alpha N-terminal domain (alpha-NTD); that stretch reads MVDPIVTKNW…EQLSIFINFD (238 aa). Residues 250–339 form an alpha C-terminal domain (alpha-CTD) region; the sequence is VEEQKLNENL…KAAPQGAPKV (90 aa).

This sequence belongs to the RNA polymerase alpha chain family. As to quaternary structure, homodimer. The RNAP catalytic core consists of 2 alpha, 1 beta, 1 beta' and 1 omega subunit. When a sigma factor is associated with the core the holoenzyme is formed, which can initiate transcription.

It catalyses the reaction RNA(n) + a ribonucleoside 5'-triphosphate = RNA(n+1) + diphosphate. Its function is as follows. DNA-dependent RNA polymerase catalyzes the transcription of DNA into RNA using the four ribonucleoside triphosphates as substrates. The polypeptide is DNA-directed RNA polymerase subunit alpha (Anaeromyxobacter dehalogenans (strain 2CP-C)).